Consider the following 241-residue polypeptide: MVTLKMAIIFLMEQIRTPFSLIWTIMSPTVLFFFLHFNEIELHYGDTAWLGKQISWFVGYISFSVVLFNYCLYLVGRRESGFIATFVHNMDGRLLFIRSQLIASLIMSILYVFFFILVVLTGFQASPDYQIVMIILKSIYINAFMMVSLTFMASFRVTFQTASTIYSVLITVCMVSGIVSLKYNEGIVYWINQVNPIAIYSTILQSDQELSLMTIFFYSIMLIISIISALTFKTEPVWSSQ.

Transmembrane regions (helical) follow at residues 17 to 35 (TPFSLIWTIMSPTVLFFFL), 54 to 72 (ISWFVGYISFSVVLFNYCL), 105 to 123 (LIMSILYVFFFILVVLTGF), 131 to 149 (IVMIILKSIYINAFMMVSL), 163 to 181 (STIYSVLITVCMVSGIVSL), and 212 to 230 (LMTIFFYSIMLIISIISAL).

The protein localises to the cell membrane. Together with two further proteins McbF and McbG this protein causes immunity to the peptide antibiotic microcin B17 (MccB17), which inhibits DNA replication in enterobacteriaceae. Immunity is determined by two different mechanisms. McbE is involved in the production of extracellular MccB17 and, in a complex with McbF it also serves as 'pump' for the export of active MccB17 from the cytoplasm to the periplasmic space. This Escherichia coli protein is Protein McbE (mcbE).